The sequence spans 529 residues: Auxin response factor 13 (529 aa).

The segment at 1–22 is disordered; that stretch reads MARPPAATAPPPPPPPPPPPPP. The span at 7 to 22 shows a compositional bias: pro residues; that stretch reads ATAPPPPPPPPPPPPP. A DNA-binding region (TF-B3) is located at residues 128-234; the sequence is YAKQLTQSDA…KLLVGVRRAA (107 aa). Disordered regions lie at residues 443–462 and 497–529; these read IVTP…PLSA and PEGV…GARL. A compositionally biased stretch (polar residues) spans 444–461; sequence VTPQNGSPPDNPVNTPLS. Acidic residues predominate over residues 499–510; it reads GVDDETATEEAS. Over residues 511-523 the composition is skewed to polar residues; that stretch reads DTSLPDSLTNGHN.

The protein belongs to the ARF family. As to quaternary structure, homo and heterodimers. In terms of tissue distribution, expressed in roots, culms, leaves and young panicles.

It localises to the nucleus. Functionally, auxin response factors (ARFs) are transcriptional factors that bind specifically to the DNA sequence 5'-TGTCTC-3' found in the auxin-responsive promoter elements (AuxREs). The polypeptide is Auxin response factor 13 (ARF13) (Oryza sativa subsp. japonica (Rice)).